The chain runs to 439 residues: Chitinase-like protein Idgf1 (439 aa).

The first 20 residues, 1–20 (MRFQLFYILGLLSVTSLTHA), serve as a signal peptide directing secretion. The GH18 domain maps to 22–439 (SNLICYYDSN…ILRSIKYFMG (418 aa)). C26 and C53 are disulfide-bonded. 3 N-linked (GlcNAc...) asparagine glycosylation sites follow: N122, N218, and N346. Cysteines 340 and 423 form a disulfide.

Belongs to the glycosyl hydrolase 18 family. IDGF subfamily. As to expression, primarily expressed in yolk cells and fat body. In larvae, it is expressed in large salivary gland cells and weakly expressed in imaginal disks. Less expressed than Idgf2 and Idgf4.

It is found in the secreted. In terms of biological role, cooperates with insulin-like peptides to stimulate the proliferation, polarization and motility of imaginal disk cells. May act by stabilizing the binding of insulin-like peptides to its receptor through a simultaneous interaction with both molecules to form a multiprotein signaling complex. This is Chitinase-like protein Idgf1 (Idgf1) from Drosophila melanogaster (Fruit fly).